Consider the following 179-residue polypeptide: Viral interleukin-10 homolog (179 aa).

Positions 1–18 (MFRASLLCCLVLLAGVWA) are cleaved as a signal peptide. 2 disulfide bridges follow: cysteine 30/cysteine 127 and cysteine 80/cysteine 133. Residues asparagine 100 and asparagine 135 are each glycosylated (N-linked (GlcNAc...) asparagine; by host).

It belongs to the IL-10 family.

It localises to the secreted. In terms of biological role, down-regulates the expression of the TAP1 gene (transporter associated with antigen processing), thereby affecting the transport of peptides into the endoplasmic reticulum and subsequent peptide loading by MHC class I molecules. In consequence, infected cells are masked for immune recognition by cytotoxic T-lymphocytes. This is Viral interleukin-10 homolog from Equus caballus (Horse).